A 277-amino-acid chain; its full sequence is Venom serine protease (277 aa).

Positions 1–19 are cleaved as a signal peptide; it reads MNCGKIILLFITIIGVAKS. Residues 34–269 form the Peptidase S1 domain; that stretch reads IVNGVETEIN…FMEFIHNATI (236 aa). Cysteines 60 and 76 form a disulfide. Residue His-75 is the Charge relay system of the active site. N-linked (GlcNAc...) asparagine glycosylation is found at Asn-84 and Asn-104. Asp-126 functions as the Charge relay system in the catalytic mechanism. 2 N-linked (GlcNAc...) asparagine glycosylation sites follow: Asn-155 and Asn-158. 2 disulfides stabilise this stretch: Cys-192–Cys-207 and Cys-216–Cys-246. Asn-218 is a glycosylation site (N-linked (GlcNAc...) asparagine). Ser-220 functions as the Charge relay system in the catalytic mechanism. A glycan (N-linked (GlcNAc...) asparagine) is linked at Asn-266.

This sequence belongs to the peptidase S1 family. As to expression, expressed by the venom duct.

The protein localises to the secreted. This Polistes dominula (European paper wasp) protein is Venom serine protease.